The sequence spans 143 residues: 3-hydroxyacyl-[acyl-carrier-protein] dehydratase FabZ (143 aa).

Residue His49 is part of the active site.

Belongs to the thioester dehydratase family. FabZ subfamily.

Its subcellular location is the cytoplasm. The enzyme catalyses a (3R)-hydroxyacyl-[ACP] = a (2E)-enoyl-[ACP] + H2O. Involved in unsaturated fatty acids biosynthesis. Catalyzes the dehydration of short chain beta-hydroxyacyl-ACPs and long chain saturated and unsaturated beta-hydroxyacyl-ACPs. The chain is 3-hydroxyacyl-[acyl-carrier-protein] dehydratase FabZ from Wolbachia pipientis wMel.